Consider the following 154-residue polypeptide: D-aminoacyl-tRNA deacylase (154 aa).

A Gly-cisPro motif, important for rejection of L-amino acids motif is present at residues 137–138 (GP).

The protein belongs to the DTD family. Homodimer.

Its subcellular location is the cytoplasm. It catalyses the reaction glycyl-tRNA(Ala) + H2O = tRNA(Ala) + glycine + H(+). The enzyme catalyses a D-aminoacyl-tRNA + H2O = a tRNA + a D-alpha-amino acid + H(+). In terms of biological role, an aminoacyl-tRNA editing enzyme that deacylates mischarged D-aminoacyl-tRNAs. Also deacylates mischarged glycyl-tRNA(Ala), protecting cells against glycine mischarging by AlaRS. Acts via tRNA-based rather than protein-based catalysis; rejects L-amino acids rather than detecting D-amino acids in the active site. By recycling D-aminoacyl-tRNA to D-amino acids and free tRNA molecules, this enzyme counteracts the toxicity associated with the formation of D-aminoacyl-tRNA entities in vivo and helps enforce protein L-homochirality. This is D-aminoacyl-tRNA deacylase from Thermomicrobium roseum (strain ATCC 27502 / DSM 5159 / P-2).